A 644-amino-acid chain; its full sequence is MALLQISEPGLTAAPHQRRLAAGIDLGTTNSLVATVRSGKAQTLADEQLADEQLIAGEQLIAGEQLIAGQQLINEKQRDLLPSVVHYHPQGIDVGWKARNLAALDPVNTISSVKRMMGRSLADIVQRYPNLPYQFHASENGLPMIQTARGLVNPVQVSAEILKTLAQRAQAALAGELDGVVITVPAYFDDAQRQGTKDAARLAGLHVLRLLNEPTAAAIAYGLDSGQEGVIAVYDLGGGTFDISILRLSRGVFEVLATGGDSALGGDDFDHLLADWLREQAGVATRDDHGIQRQLLDTAIAAKIALSEAETAVVSVAGWQGEVTREQLESLIAPLVKRTLMACRRALKDAGVTADEILEVVMVGGSTRVPLVREQVGQFFGRTPLTSIDPDKVVAIGAAIQADILVGNKPDSDMLLLDVIPLSLGLETMGGLVEKVIPRNTTIPAARAQEFTTFKDGQSAMMIHVLQGERELVKDCRSLARFTLRGLPPLPAGGAHIRVTFQVDADGLLSVTAMEKSTGVEASIQVKPSYGLSDDEIANMIKDSMANAQSDITARKLAEQQVDAARVLESLQGALAEDAALLSEQESAAIAQAVALLQQQMQGSDPQAIEAATKALDAQTQDFAARRMDASIRRALAGHSVDEV.

This sequence belongs to the heat shock protein 70 family.

Its function is as follows. Chaperone involved in the maturation of iron-sulfur cluster-containing proteins. Has a low intrinsic ATPase activity which is markedly stimulated by HscB. Involved in the maturation of IscU. This chain is Chaperone protein HscA, found in Yersinia pseudotuberculosis serotype I (strain IP32953).